The sequence spans 257 residues: Peptide methionine sulfoxide reductase (257 aa).

The disordered stretch occupies residues 61-88 (LGFGSRPQPDPAASSAIAQGPDDDVPSP). Serine 244 carries the post-translational modification Phosphoserine.

It belongs to the MsrA Met sulfoxide reductase family.

The enzyme catalyses L-methionyl-[protein] + [thioredoxin]-disulfide + H2O = L-methionyl-(S)-S-oxide-[protein] + [thioredoxin]-dithiol. It carries out the reaction [thioredoxin]-disulfide + L-methionine + H2O = L-methionine (S)-S-oxide + [thioredoxin]-dithiol. Its function is as follows. Has an important function as a repair enzyme for proteins that have been inactivated by oxidation. Catalyzes the reversible oxidation-reduction of methionine sulfoxide in proteins to methionine. In Brassica napus (Rape), this protein is Peptide methionine sulfoxide reductase (PMSR).